Here is a 216-residue protein sequence, read N- to C-terminus: Large ribosomal subunit protein uL1 (216 aa).

This sequence belongs to the universal ribosomal protein uL1 family.

The protein is Large ribosomal subunit protein uL1 of Oryza sativa subsp. indica (Rice).